The primary structure comprises 355 residues: 6-aminohexanoate-oligomer endohydrolase (355 aa).

The active-site Nucleophile is the T267.

Belongs to the peptidase S58 family. Heterotetramer composed of 4 alpha/beta heterodimers. Exists at the monomer/dimer/trimer equilibrium in aqueous solution. In terms of processing, expressed as an inactive precursor that is cleaved autocatalytically at Asn266/Thr267 to generate an active enzyme composed of an alpha subunit and a beta subunit.

It catalyses the reaction [N-(6-aminohexanoyl)]n + H2O = [N-(6-aminohexanoyl)]n-x + [N-(6-aminohexanoyl)]x.. Its pathway is xenobiotic degradation; nylon-6 oligomer degradation. In terms of biological role, involved in the degradation of nylon-6 oligomers. Degrades cyclic and linear oligomers of 6-aminohexanoate (Ahx) with a degree of polymerization greater than three by an endo-type mode. Cannot use Ahx cyclic dimer or the Ahx linear dimer. In Paenarthrobacter ureafaciens, this protein is 6-aminohexanoate-oligomer endohydrolase.